Here is a 229-residue protein sequence, read N- to C-terminus: Phosphoglycolate phosphatase (229 aa).

Aspartate 18 (nucleophile) is an active-site residue. Mg(2+) is bound by residues aspartate 18, aspartate 20, and aspartate 176.

The protein belongs to the HAD-like hydrolase superfamily. CbbY/CbbZ/Gph/YieH family. Mg(2+) serves as cofactor.

The catalysed reaction is 2-phosphoglycolate + H2O = glycolate + phosphate. Its pathway is organic acid metabolism; glycolate biosynthesis; glycolate from 2-phosphoglycolate: step 1/1. Its function is as follows. Specifically catalyzes the dephosphorylation of 2-phosphoglycolate. Is involved in the dissimilation of the intracellular 2-phosphoglycolate formed during the DNA repair of 3'-phosphoglycolate ends, a major class of DNA lesions induced by oxidative stress. This chain is Phosphoglycolate phosphatase, found in Xylella fastidiosa (strain Temecula1 / ATCC 700964).